We begin with the raw amino-acid sequence, 142 residues long: Large ribosomal subunit protein uL11 (142 aa).

It belongs to the universal ribosomal protein uL11 family. In terms of assembly, part of the ribosomal stalk of the 50S ribosomal subunit. Interacts with L10 and the large rRNA to form the base of the stalk. L10 forms an elongated spine to which L12 dimers bind in a sequential fashion forming a multimeric L10(L12)X complex. In terms of processing, one or more lysine residues are methylated.

In terms of biological role, forms part of the ribosomal stalk which helps the ribosome interact with GTP-bound translation factors. This Acinetobacter baylyi (strain ATCC 33305 / BD413 / ADP1) protein is Large ribosomal subunit protein uL11.